Here is a 505-residue protein sequence, read N- to C-terminus: Amidophosphoribosyltransferase (505 aa).

The active-site Nucleophile is the Cys2. The 235-residue stretch at 2–236 (CGIVGIAGVM…PGEAIYITEE (235 aa)) folds into the Glutamine amidotransferase type-2 domain. 3 residues coordinate Mg(2+): Thr305, Asp367, and Asp368.

This sequence in the C-terminal section; belongs to the purine/pyrimidine phosphoribosyltransferase family. As to quaternary structure, homotetramer. Mg(2+) serves as cofactor.

The catalysed reaction is 5-phospho-beta-D-ribosylamine + L-glutamate + diphosphate = 5-phospho-alpha-D-ribose 1-diphosphate + L-glutamine + H2O. It participates in purine metabolism; IMP biosynthesis via de novo pathway; N(1)-(5-phospho-D-ribosyl)glycinamide from 5-phospho-alpha-D-ribose 1-diphosphate: step 1/2. With respect to regulation, inhibited by iodoacetamide and by the glutamine analogs chloroketone and DON. In terms of biological role, catalyzes the formation of phosphoribosylamine from phosphoribosylpyrophosphate (PRPP) and glutamine. Can also use NH(3) in place of glutamine. The sequence is that of Amidophosphoribosyltransferase from Escherichia coli (strain K12).